The chain runs to 740 residues: Elongation factor 2 (740 aa).

The 246-residue stretch at 18 to 263 (EQVRNIGIIA…MVVRWVPNPR (246 aa)) folds into the tr-type G domain. GTP-binding positions include 27 to 34 (AHVDHGKT), 93 to 97 (DTPGH), and 147 to 150 (NKVD). At His606 the chain carries Diphthamide.

It belongs to the TRAFAC class translation factor GTPase superfamily. Classic translation factor GTPase family. EF-G/EF-2 subfamily.

The protein localises to the cytoplasm. In terms of biological role, catalyzes the GTP-dependent ribosomal translocation step during translation elongation. During this step, the ribosome changes from the pre-translocational (PRE) to the post-translocational (POST) state as the newly formed A-site-bound peptidyl-tRNA and P-site-bound deacylated tRNA move to the P and E sites, respectively. Catalyzes the coordinated movement of the two tRNA molecules, the mRNA and conformational changes in the ribosome. The chain is Elongation factor 2 from Ignicoccus hospitalis (strain KIN4/I / DSM 18386 / JCM 14125).